The chain runs to 220 residues: MTFKQIAIDGPAGAGKSTVAKKLAALLGYTYVDSGAMYRALTYWALKNDINIHNVEAIVNLCTSIHITFINQDIAVNNQIVNTEIRSPEVNNNVSHIAKIPEVRKHLVSLQKCIALSQNVIMDGRDIGTHVLPDADIKVFLTASTQERAQRRYIELVEKGIQTSLMEVEQGIIQRDQMDSKRQYAPLTQADDAVVIDSTGKSIDAIVEEVLRIFNGKERG.

ATP is bound at residue 10-18 (GPAGAGKST).

Belongs to the cytidylate kinase family. Type 1 subfamily.

The protein resides in the cytoplasm. The enzyme catalyses CMP + ATP = CDP + ADP. The catalysed reaction is dCMP + ATP = dCDP + ADP. The polypeptide is Cytidylate kinase (Alkaliphilus metalliredigens (strain QYMF)).